The sequence spans 331 residues: Phosphoribosylformylglycinamidine cyclo-ligase (331 aa).

This sequence belongs to the AIR synthase family.

The protein resides in the cytoplasm. The enzyme catalyses 2-formamido-N(1)-(5-O-phospho-beta-D-ribosyl)acetamidine + ATP = 5-amino-1-(5-phospho-beta-D-ribosyl)imidazole + ADP + phosphate + H(+). It functions in the pathway purine metabolism; IMP biosynthesis via de novo pathway; 5-amino-1-(5-phospho-D-ribosyl)imidazole from N(2)-formyl-N(1)-(5-phospho-D-ribosyl)glycinamide: step 2/2. In Clostridium botulinum (strain Loch Maree / Type A3), this protein is Phosphoribosylformylglycinamidine cyclo-ligase.